The following is a 664-amino-acid chain: Macoilin (664 aa).

The next 4 helical transmembrane spans lie at 28-48, 75-95, 120-140, and 154-174; these read TFLYLKFLVVWALVLLADFVV, AFSVFFVCVAFTSNIICLLFI, VCLPTVSLWILFVYIEAAIRF, and FAAHCIGYPVVTLGFGFKSYV. Positions 253–265 are enriched in basic and acidic residues; that stretch reads REKGKEKDKDAKK. Residues 253 to 274 are disordered; that stretch reads REKGKEKDKDAKKHNLGINNNN. Phosphoserine is present on S305. Residues 320–348 are compositionally biased toward polar residues; the sequence is KNYKNASGVVNSSPRSHSATNGSIPSSSS. A disordered region spans residues 320–375; the sequence is KNYKNASGVVNSSPRSHSATNGSIPSSSSKNEKKQKCTSKSPSTHKDLMENCIPNN. N324 is a glycosylation site (N-linked (GlcNAc...) asparagine). Position 332 is a phosphoserine (S332). Residues N340 and N452 are each glycosylated (N-linked (GlcNAc...) asparagine). Positions 630-664 are disordered; the sequence is TSPLSPVSPHYSSKFVETSPSGLDPNASVYQPLKK. Phosphoserine is present on residues S631 and S634. An N-linked (GlcNAc...) asparagine glycan is attached at N655.

It belongs to the macoilin family.

It localises to the rough endoplasmic reticulum membrane. It is found in the nucleus membrane. Plays a role in the regulation of neuronal activity. This Pan troglodytes (Chimpanzee) protein is Macoilin (MACO1).